Reading from the N-terminus, the 227-residue chain is Cytidylate kinase (227 aa).

12–20 (GPSGAGKGT) lines the ATP pocket.

Belongs to the cytidylate kinase family. Type 1 subfamily.

It localises to the cytoplasm. The catalysed reaction is CMP + ATP = CDP + ADP. The enzyme catalyses dCMP + ATP = dCDP + ADP. This Shigella sonnei (strain Ss046) protein is Cytidylate kinase.